The following is a 209-amino-acid chain: Ribonuclease HII (209 aa).

The RNase H type-2 domain maps to 20–209; the sequence is DSEIGIDEVG…KSFLNKLNLI (190 aa). A divalent metal cation contacts are provided by Asp26, Glu27, and Asp122.

It belongs to the RNase HII family. Mn(2+) is required as a cofactor. It depends on Mg(2+) as a cofactor.

It is found in the cytoplasm. The enzyme catalyses Endonucleolytic cleavage to 5'-phosphomonoester.. Its function is as follows. Endonuclease that specifically degrades the RNA of RNA-DNA hybrids. In Prochlorococcus marinus subsp. pastoris (strain CCMP1986 / NIES-2087 / MED4), this protein is Ribonuclease HII.